The primary structure comprises 615 residues: MNEPNRNFFWIFFLILGIFWLQSVWFGSRTVQQIPYSQYESLVKQGDVQNLIVTENHIRGEFKQPQNGFKSFVTNRVEPELAKELSGAGVTYRREIENTFFRDLLSWVVPALIFVAVFLYFSRKFAEKGGMSGLMSVGKSGARLYAETGVKVSFGDVAGVEEAKAELYEVVQFLKSPQEFGRLGARMPKGILLVGPPGTGKTLLAKAVAGEAQVPFYSITGSEFVEMFVGVGAARVRDLFEQARKNAPCIIFIDELDALGKVRGVAGSFGGHDEKEQTLNQLLAELDGFDSRSGVVILAATNRPEVLDPALLRAGRFDRQVLVDRPDRTGREQILRVHLKKIKADEALNVEHLAHLTSGFTGADIANLINEAAMVATRRKAETVNEKDFVAAIERIVAGLEKKSRLLNEKEKAIVAHHEMGHAIMACLFPGVDKVQKISIIPRGLGALGYTMQRPTEDRYLMTRPELLDKICVLLGGRVAEELIFGEVSTGASDDLVRVTNIAEALVTRYGMSEVLGNIVFEQPTGNFLEVPGAGYRSRTYSEKSATEIDQEIRQIVAACALRTRESLAANLSILKKGAAQLLEKETLSEPEIELLMRDLVVKNAAPQRERDLSV.

Over 1–7 (MNEPNRN) the chain is Cytoplasmic. Residues 8 to 28 (FFWIFFLILGIFWLQSVWFGS) traverse the membrane as a helical segment. Topologically, residues 29–99 (RTVQQIPYSQ…VTYRREIENT (71 aa)) are periplasmic. The chain crosses the membrane as a helical span at residues 100–120 (FFRDLLSWVVPALIFVAVFLY). Residues 121-615 (FSRKFAEKGG…APQRERDLSV (495 aa)) are Cytoplasmic-facing. 195-202 (GPPGTGKT) is an ATP binding site. His-418 is a Zn(2+) binding site. Residue Glu-419 is part of the active site. His-422 and Asp-495 together coordinate Zn(2+).

The protein in the central section; belongs to the AAA ATPase family. This sequence in the C-terminal section; belongs to the peptidase M41 family. Homohexamer. Requires Zn(2+) as cofactor.

It is found in the cell inner membrane. Acts as a processive, ATP-dependent zinc metallopeptidase for both cytoplasmic and membrane proteins. Plays a role in the quality control of integral membrane proteins. In Bdellovibrio bacteriovorus (strain ATCC 15356 / DSM 50701 / NCIMB 9529 / HD100), this protein is ATP-dependent zinc metalloprotease FtsH 2.